Here is a 421-residue protein sequence, read N- to C-terminus: Threonine--tRNA ligase editing subunit (421 aa).

It belongs to the class-II aminoacyl-tRNA synthetase family. Archaea-specific ThrRS editing domain subfamily. Probably interacts with its catalytic subunit.

It localises to the cytoplasm. Its function is as follows. Freestanding tRNA editing subunit of threonine--tRNA ligase, the catalytic subunit is probably AC Q9YDW0. Deacylates (edits) mischarged L-seryl-tRNA(Thr) in trans; has no activity on correctly charged L-threonyl-tRNA(Thr). Probably does not aminoacylate tRNA(Thr). Deacylates correctly charged glycyl-tRNA(Gly), but not glycyl-tRNA(Gly)(2'-dA76) (the terminal 2'-OH of tRNA adenine 76 has been dehydroxylated) nor the 2'-fluoro tRNA derivative, strongly suggesting the editing function is catalyzed by the 2'-OH of A76 of tRNA(Thr). This chain is Threonine--tRNA ligase editing subunit (thrS2), found in Aeropyrum pernix (strain ATCC 700893 / DSM 11879 / JCM 9820 / NBRC 100138 / K1).